Here is a 288-residue protein sequence, read N- to C-terminus: Probable prolyl 4-hydroxylase 6 (288 aa).

Residues 1–4 are Cytoplasmic-facing; that stretch reads MDSQ. A helical; Signal-anchor for type II membrane protein membrane pass occupies residues 5–27; it reads YFLAFSLSLLLIFSQISSFSFSV. At 28–288 the chain is on the lumenal side; that stretch reads DPTRITQLSW…GFCRKSCKAC (261 aa). Residues 116–238 form the Fe2OG dioxygenase domain; the sequence is NGEALQILHY…KWSATRWIHV (123 aa). Residues His134 and Asp136 each coordinate Fe cation. Residues Asn160 and Asn210 are each glycosylated (N-linked (GlcNAc...) asparagine). His219 is a binding site for Fe cation. Lys229 lines the 2-oxoglutarate pocket. The ShKT domain occupies 248–288; the sequence is CVDDHESCQEWADAGECEKNPMYMVGSETSLGFCRKSCKAC. Cystine bridges form between Cys248/Cys288, Cys255/Cys281, and Cys264/Cys285.

The protein belongs to the P4HA family. Requires Fe(2+) as cofactor. L-ascorbate serves as cofactor.

Its subcellular location is the endoplasmic reticulum membrane. The catalysed reaction is L-prolyl-[collagen] + 2-oxoglutarate + O2 = trans-4-hydroxy-L-prolyl-[collagen] + succinate + CO2. Its function is as follows. Catalyzes the post-translational formation of 4-hydroxyproline in -Xaa-Pro-Gly- sequences in proline-rich peptide sequences of plant glycoproteins and other proteins. Hydroxyprolines are important constituent of many plant cell wall glycoproteins such as extensins, hydroxyproline-rich glycoproteins, lectins and arabinogalactan proteins. The protein is Probable prolyl 4-hydroxylase 6 of Arabidopsis thaliana (Mouse-ear cress).